Here is a 373-residue protein sequence, read N- to C-terminus: NADPH-dependent 3-keto-steroid reductase Hsd3b5 (373 aa).

Residues 10 to 15 (GAGGFL), Tyr-155, and Lys-159 each bind NADP(+). Lys-159 functions as the Proton donor in the catalytic mechanism. The helical transmembrane segment at 288 to 308 (LPLLYWLAFLLETVSFLLRPF) threads the bilayer. Lys-350 bears the N6-acetyllysine mark.

It belongs to the 3-beta-HSD family. In terms of tissue distribution, expressed predominantly in male liver.

Its subcellular location is the endoplasmic reticulum membrane. It is found in the mitochondrion membrane. The catalysed reaction is a 3beta-hydroxysteroid + NADP(+) = a 3-oxosteroid + NADPH + H(+). The enzyme catalyses 5alpha-androstane-3beta,17beta-diol + NADP(+) = 17beta-hydroxy-5alpha-androstan-3-one + NADPH + H(+). It carries out the reaction 3beta-hydroxy-5alpha-androstan-17-one + NADP(+) = 5alpha-androstan-3,17-dione + NADPH + H(+). It participates in steroid metabolism. Functionally, responsible for the reduction of the oxo group on the C-3 of 5alpha-androstane steroids. Catalyzes the conversion of dihydrotestosterone to its inactive form 5alpha-androstanediol, that does not bind androgen receptor/AR. Also converts androstanedione, a precursor of testosterone and estrone, to epiandrosterone. Does not function as an isomerase. This Rattus norvegicus (Rat) protein is NADPH-dependent 3-keto-steroid reductase Hsd3b5.